The following is a 271-amino-acid chain: Protein CDV3 homolog (271 aa).

Basic and acidic residues predominate over residues 37-47; that stretch reads KREVVKPKKPE. Disordered stretches follow at residues 37-151 and 186-271; these read KREV…GHGP and SQQA…DEAS. The segment covering 48–61 has biased composition (low complexity); sequence VAAGGVAVVGENEN. Residues 73 to 82 show a composition bias toward acidic residues; sequence VEEEWKEFEE. The span at 95 to 114 shows a compositional bias: polar residues; sequence QLSTISSARSRTAQESSESQ. A Phosphoserine modification is found at serine 134. A compositionally biased stretch (basic and acidic residues) spans 224–242; that stretch reads RPEEQRKKKNEPAFEEVRH.

This sequence belongs to the CDV3 family.

The sequence is that of Protein CDV3 homolog from Drosophila melanogaster (Fruit fly).